We begin with the raw amino-acid sequence, 399 residues long: Polypyrimidine tract-binding protein homolog 1 (399 aa).

Serine 2 carries the post-translational modification N-acetylserine. 3 RRM domains span residues 17 to 95 (KVVH…YSNR), 109 to 196 (GNVL…YSAH), and 242 to 322 (SNVL…YSRH). A disordered region spans residues 352–399 (AVSGSAPPAGWQNPQAQSQYSGYGGSPYMYPSSDPNGASPSGQPPYYG). Over residues 365 to 384 (PQAQSQYSGYGGSPYMYPSS) the composition is skewed to low complexity.

It is found in the nucleus. Plays a role in pre-mRNA splicing. Binds to the polypyrimidine tract of introns. May promote the binding of U2 snRNP to pre-mRNA. The chain is Polypyrimidine tract-binding protein homolog 1 (PTB) from Arabidopsis thaliana (Mouse-ear cress).